The chain runs to 213 residues: Orotate phosphoribosyltransferase (213 aa).

Residue Lys-26 participates in 5-phospho-alpha-D-ribose 1-diphosphate binding. 34–35 (FF) contributes to the orotate binding site. 5-phospho-alpha-D-ribose 1-diphosphate-binding positions include 72–73 (YK), Arg-99, Lys-100, Lys-103, His-105, and 124–132 (DDVITAGTA). Orotate is bound by residues Thr-128 and Arg-156.

It belongs to the purine/pyrimidine phosphoribosyltransferase family. PyrE subfamily. As to quaternary structure, homodimer. Requires Mg(2+) as cofactor.

It carries out the reaction orotidine 5'-phosphate + diphosphate = orotate + 5-phospho-alpha-D-ribose 1-diphosphate. Its pathway is pyrimidine metabolism; UMP biosynthesis via de novo pathway; UMP from orotate: step 1/2. In terms of biological role, catalyzes the transfer of a ribosyl phosphate group from 5-phosphoribose 1-diphosphate to orotate, leading to the formation of orotidine monophosphate (OMP). This chain is Orotate phosphoribosyltransferase, found in Saccharophagus degradans (strain 2-40 / ATCC 43961 / DSM 17024).